Consider the following 101-residue polypeptide: Large ribosomal subunit protein eL43 (101 aa).

Residues 40 to 62 (CPSCRSLVRLQRIAFGIWKCPKC) form a C4-type zinc finger.

This sequence belongs to the eukaryotic ribosomal protein eL43 family. Zn(2+) is required as a cofactor.

This chain is Large ribosomal subunit protein eL43, found in Pyrobaculum neutrophilum (strain DSM 2338 / JCM 9278 / NBRC 100436 / V24Sta) (Thermoproteus neutrophilus).